A 484-amino-acid chain; its full sequence is Glutamate--tRNA ligase (484 aa).

The 'HIGH' region motif lies at 11–21 (PSPTGYLHIGN). The 'KMSKS' region signature appears at 252 to 256 (KLSKR). Residue Lys255 participates in ATP binding.

It belongs to the class-I aminoacyl-tRNA synthetase family. Glutamate--tRNA ligase type 1 subfamily. In terms of assembly, monomer.

It is found in the cytoplasm. It carries out the reaction tRNA(Glu) + L-glutamate + ATP = L-glutamyl-tRNA(Glu) + AMP + diphosphate. Its function is as follows. Catalyzes the attachment of glutamate to tRNA(Glu) in a two-step reaction: glutamate is first activated by ATP to form Glu-AMP and then transferred to the acceptor end of tRNA(Glu). This Staphylococcus epidermidis (strain ATCC 35984 / DSM 28319 / BCRC 17069 / CCUG 31568 / BM 3577 / RP62A) protein is Glutamate--tRNA ligase.